Here is a 345-residue protein sequence, read N- to C-terminus: MDIFREIASSMKGENVFISPASISSVLTILYYGANGSTAEQLSKYVEKEENMDKVSAQNISFKSINKVYGRYSAVFKDSFLRKIGDKFQTVDFTDCRTIDAINKCVDIFTEGKINPLLDEPLSPDTCLLAISAVYFKAKWLTPFEKEFTSDYPFYVSPTEMVDVSMMSMYGKAFNHASVKESFGNFSIIELPYVGDTSMMVILPDKIDGLESIEQNLTDTNFKKWCNSLEATFIDVHIPKFKVTGSYNLVDTLVKSGLTEVFGSTGDYSNMCNSDVSVDAMIHKTYIDVNEEYTEAAAATCALVSDCASTITNEFCVDHPFIYVIRHVDGKILFVGRYCSPTTNC.

It belongs to the serpin family. Poxviruses subfamily.

Its subcellular location is the host cytoplasm. Its function is as follows. Viral serpin that inhibits both cysteine and serine proteinases involved in the regulation of host inflammatory and apoptosis processes. Major anti-apoptotic protein which inhibits both intrinsic and extrinsic pathways and strongly cleaves host CASP1 and CASP8 but is a rather poor inhibitor of host CASP3. Prevents the proteolytic activity of host interleukin-1-beta converting enzyme (ICE) and ICE-like enzymes. Can also block apoptosis through host tumor necrosis factor (TNF) receptor. The inhibition of host ICE is an example of a 'cross-class' interaction, in which a serpin inhibits a non-serine proteinase. Also inhibits granzyme B. In Vaccinia virus (strain Western Reserve) (VACV), this protein is Serine proteinase inhibitor 2 (OPG199).